Consider the following 131-residue polypeptide: Profilin-1 (131 aa).

Cysteines 13 and 115 form a disulfide. An Involved in PIP2 interaction motif is present at residues 81–97 (AVIRGKKGSGGITVKKT). At Thr-111 the chain carries Phosphothreonine.

It belongs to the profilin family. As to quaternary structure, multimer. Occurs in many kinds of cells as a complex with monomeric actin in a 1:1 ratio. Phosphorylated by MAP kinases. In terms of tissue distribution, pollen specific.

It is found in the cytoplasm. It localises to the cytoskeleton. Binds to actin and affects the structure of the cytoskeleton. At high concentrations, profilin prevents the polymerization of actin, whereas it enhances it at low concentrations. By binding to PIP2, it inhibits the formation of IP3 and DG. This Zea mays (Maize) protein is Profilin-1 (PRO1).